Consider the following 261-residue polypeptide: UPF0328 protein ECU06_0100 (261 aa).

It belongs to the UPF0328 family.

The chain is UPF0328 protein ECU06_0100 from Encephalitozoon cuniculi (strain GB-M1) (Microsporidian parasite).